The chain runs to 435 residues: Centrosomal protein of 55 kDa (435 aa).

3 disordered regions span residues 1–63 (MAAK…TDKA), 213–239 (HKEA…KVSR), and 268–287 (ERRR…ALLQ). Coiled coils occupy residues 18 to 140 (SSSS…KNKY) and 185 to 373 (EAYV…RESR). 2 stretches are compositionally biased toward basic and acidic residues: residues 26–49 (AELE…DMKR) and 213–222 (HKEAKSDDQS).

It is found in the cytoplasm. The protein localises to the cytoskeleton. Its subcellular location is the microtubule organizing center. The protein resides in the centrosome. It localises to the centriole. It is found in the cleavage furrow. The protein localises to the midbody. Its subcellular location is the midbody ring. Plays a role in mitotic exit and cytokinesis. Recruits PDCD6IP and TSG101 to midbody during cytokinesis. Required for successful completion of cytokinesis. Not required for microtubule nucleation. Plays a role in the development of the brain and kidney. The chain is Centrosomal protein of 55 kDa from Danio rerio (Zebrafish).